Reading from the N-terminus, the 261-residue chain is 3-methyl-2-oxobutanoate hydroxymethyltransferase (261 aa).

Aspartate 42 and aspartate 81 together coordinate Mg(2+). Residues 42-43 (DS), aspartate 81, and lysine 110 each bind 3-methyl-2-oxobutanoate. Glutamate 112 is a binding site for Mg(2+). Residue glutamate 179 is the Proton acceptor of the active site.

The protein belongs to the PanB family. Homodecamer; pentamer of dimers. The cofactor is Mg(2+).

The protein resides in the cytoplasm. The catalysed reaction is 3-methyl-2-oxobutanoate + (6R)-5,10-methylene-5,6,7,8-tetrahydrofolate + H2O = 2-dehydropantoate + (6S)-5,6,7,8-tetrahydrofolate. Its pathway is cofactor biosynthesis; coenzyme A biosynthesis. Its function is as follows. Catalyzes the reversible reaction in which hydroxymethyl group from 5,10-methylenetetrahydrofolate is transferred onto alpha-ketoisovalerate to form ketopantoate. This chain is 3-methyl-2-oxobutanoate hydroxymethyltransferase, found in Pyrobaculum islandicum (strain DSM 4184 / JCM 9189 / GEO3).